The sequence spans 175 residues: Ribosome maturation factor RimM (175 aa).

The 80-residue stretch at 96–175 folds into the PRC barrel domain; it reads DGDYYWKDLI…IIKVDWDPEF (80 aa).

This sequence belongs to the RimM family. Binds ribosomal protein uS19.

The protein localises to the cytoplasm. An accessory protein needed during the final step in the assembly of 30S ribosomal subunit, possibly for assembly of the head region. Essential for efficient processing of 16S rRNA. May be needed both before and after RbfA during the maturation of 16S rRNA. It has affinity for free ribosomal 30S subunits but not for 70S ribosomes. The chain is Ribosome maturation factor RimM from Baumannia cicadellinicola subsp. Homalodisca coagulata.